A 405-amino-acid polypeptide reads, in one-letter code: Squamosa promoter-binding-like protein 6 (405 aa).

The SBP-type zinc finger occupies 121-198 (NPLCQVYGCS…AGHNERRRKP (78 aa)). Zn(2+) contacts are provided by Cys124, Cys129, Cys146, His149, Cys165, Cys168, His172, and Cys184. A Bipartite nuclear localization signal motif is present at residues 181-197 (KRSCRRRLAGHNERRRK).

Requires Zn(2+) as cofactor.

The protein resides in the nucleus. Its function is as follows. Trans-acting factor that binds specifically to the consensus nucleotide sequence 5'-TNCGTACAA-3'. In Arabidopsis thaliana (Mouse-ear cress), this protein is Squamosa promoter-binding-like protein 6 (SPL6).